The sequence spans 335 residues: MRIALDAMGGDHAPGEIVKGAIEAAEELHLQILLVGRPDAIEPLLKEASAGARSRLDIVAASEVIAMDESPATALRKKKDASIVVATRLVKEGRAQALVSAGSTGAQMAASLLGLGRISGIDRPAIATILPTLEGGKLLLDVGANSEAKPRNLLQFAHMGSIYAEKVMGIANPRVALLNIGEEETKGNELVLGAYGMLREAPLHFIGNVEGRDIFFGRADVIVCDGFVGNVVLKFGEGMVSALKTMIKDELKNSRMAQLGALLAAPALRGMGKRLDYAEYGGAPLLGVNGVSIICHGSSKAKAIKNALRVARQGVQQNFIAAIQEHIPGKVEPVC.

Belongs to the PlsX family. As to quaternary structure, homodimer. Probably interacts with PlsY.

The protein localises to the cytoplasm. It catalyses the reaction a fatty acyl-[ACP] + phosphate = an acyl phosphate + holo-[ACP]. The protein operates within lipid metabolism; phospholipid metabolism. Functionally, catalyzes the reversible formation of acyl-phosphate (acyl-PO(4)) from acyl-[acyl-carrier-protein] (acyl-ACP). This enzyme utilizes acyl-ACP as fatty acyl donor, but not acyl-CoA. The chain is Phosphate acyltransferase from Heliobacterium modesticaldum (strain ATCC 51547 / Ice1).